An 852-amino-acid chain; its full sequence is Lon protease homolog 2, peroxisomal (852 aa).

Serine 2 carries the post-translational modification N-acetylserine. The 210-residue stretch at 13 to 222 folds into the Lon N-terminal domain; that stretch reads LPLLLTHESV…MTIPLLVRQI (210 aa). 375–382 contributes to the ATP binding site; sequence GPPGVGKT. A Lon proteolytic domain is found at 651–837; it reads LSQPGVAIGL…DEVLNAAFDG (187 aa). Active-site residues include serine 743 and lysine 786. The Microbody targeting signal motif lies at 850–852; it reads SKL.

The protein belongs to the peptidase S16 family. In terms of assembly, interacts with PEX5. Interacts with TYSND1. May interact with enzymes involved in beta-oxidation of fatty acids, including ACOX1/AOX.

It is found in the peroxisome matrix. The enzyme catalyses Hydrolysis of proteins in presence of ATP.. Its function is as follows. ATP-dependent serine protease that mediates the selective degradation of misfolded and unassembled polypeptides in the peroxisomal matrix. Necessary for type 2 peroxisome targeting signal (PTS2)-containing protein processing and facilitates peroxisome matrix protein import. May indirectly regulate peroxisomal fatty acid beta-oxidation through degradation of the self-processed forms of TYSND1. The polypeptide is Lon protease homolog 2, peroxisomal (Lonp2) (Rattus norvegicus (Rat)).